We begin with the raw amino-acid sequence, 132 residues long: mRNA interferase toxin YafO (132 aa).

In terms of assembly, probably forms a complex with the antitoxin YafN which inhibits the mRNA interferase activity.

In terms of biological role, toxic component of a type II toxin-antitoxin (TA) system. A translation-dependent mRNA interferase. Overexpression causes cessation of cell growth and inhibits cell proliferation via inhibition of translation; this blockage is overcome by subsequent expression of antitoxin YafN. Overexpression causes cleavage of a number of mRNAs in a ribosome-dependent fashion. YafO binding to the 50S ribosomal subunit in the translation complex induces mRNA cleavage 3' to the region protected by the ribosome; YafO alone is not able to digest mRNA. In Escherichia coli (strain K12), this protein is mRNA interferase toxin YafO (yafO).